The sequence spans 615 residues: MYTKLSLFPRKSSSLLSIANEKRIHQFLRNLCTAVERLDFGNSNDSSEMNPREGYNGRIQNRTGSSGEVSESIHTQSQSLGSNQGRNEQSWKQSPSLSNSQVQSQYQGNWYGTNSDYQNGVGSSWHSGKTIDREVYDMIMEFDEYCIQENVRVALTTMEKLEKKGYVMDFVRLLKLTQLCREGNVYYEVSVLEEAKVSVLAKIRALVNNLEANYLKYYTDIMIEEYDAFCKHGKVKKALYTIDILASMNYVVDLSRLLRLAKICGEAEGLQEAKTVHGKISASVSHLDLSSNHVLLEMYSNCGLANEAASVFEKMSEKNLETWCIIIRCFAKNGFGEDAIDMFSRFKEEGNIPDGQLFRGIFYACGMLGDVDEGLLHFESMSRDYGIAPSIEDYVSLVEMYALPGFLDEALEFVERMPMEPNVDVWETLMNLSRVHGNLELGDYCAEVVEFLDPTRLNKQSREGFIPVKASDVEKESLKKRSGILHGVKSSMQEFRAGDTNLPENDELFQLLRNLKMHMVEVGYVAETRMALHDIDQESKETLLLGHSERIAFARAVLNSAPRKPFTVIKNLRVCVDCHNALKIMSDIVGREVITRDIKRFHQMKNGACTCKDYW.

A disordered region spans residues 40-98; sequence FGNSNDSSEMNPREGYNGRIQNRTGSSGEVSESIHTQSQSLGSNQGRNEQSWKQSPSLS. A compositionally biased stretch (polar residues) spans 58–98; the sequence is RIQNRTGSSGEVSESIHTQSQSLGSNQGRNEQSWKQSPSLS. 4 PPR repeats span residues 288-318, 319-353, 354-389, and 390-420; these read DLSSNHVLLEMYSNCGLANEAASVFEKMSEK, NLETWCIIIRCFAKNGFGEDAIDMFSRFKEEGNIP, DGQLFRGIFYACGMLGDVDEGLLHFESMSRDYGIAP, and SIEDYVSLVEMYALPGFLDEALEFVERMPME. The type E(+) motif stretch occupies residues 490 to 520; sequence SSMQEFRAGDTNLPENDELFQLLRNLKMHMV. The tract at residues 521 to 615 is type DYW motif; it reads EVGYVAETRM…NGACTCKDYW (95 aa).

Belongs to the PPR family. PCMP-H subfamily.

The chain is Pentatricopeptide repeat-containing protein At2g25580 (PCMP-H75) from Arabidopsis thaliana (Mouse-ear cress).